Reading from the N-terminus, the 232-residue chain is 7-cyano-7-deazaguanine synthase (232 aa).

ATP is bound at residue 8–18 (FSGGQDSTTCL). Residues Cys189, Cys198, Cys201, and Cys204 each contribute to the Zn(2+) site.

The protein belongs to the QueC family. Zn(2+) serves as cofactor.

It catalyses the reaction 7-carboxy-7-deazaguanine + NH4(+) + ATP = 7-cyano-7-deazaguanine + ADP + phosphate + H2O + H(+). It functions in the pathway purine metabolism; 7-cyano-7-deazaguanine biosynthesis. In terms of biological role, catalyzes the ATP-dependent conversion of 7-carboxy-7-deazaguanine (CDG) to 7-cyano-7-deazaguanine (preQ(0)). This Yersinia pseudotuberculosis serotype O:1b (strain IP 31758) protein is 7-cyano-7-deazaguanine synthase.